The sequence spans 186 residues: Single-stranded DNA-binding protein 1 (186 aa).

The region spanning 1 to 108 is the SSB domain; sequence MDATVTVVGN…LEIDEIGPTL (108 aa). A disordered region spans residues 119 to 186; the sequence is TQAGHGVSPD…EDFDSDEVPF (68 aa). A compositionally biased stretch (acidic residues) spans 175–186; sequence SYEDFDSDEVPF.

In terms of assembly, homotetramer.

The protein is Single-stranded DNA-binding protein 1 (ssb1) of Tropheryma whipplei (strain Twist) (Whipple's bacillus).